The following is a 484-amino-acid chain: Probable glycine dehydrogenase (decarboxylating) subunit 2 (484 aa).

At K264 the chain carries N6-(pyridoxal phosphate)lysine.

This sequence belongs to the GcvP family. C-terminal subunit subfamily. In terms of assembly, the glycine cleavage system is composed of four proteins: P, T, L and H. In this organism, the P 'protein' is a heterodimer of two subunits. Requires pyridoxal 5'-phosphate as cofactor.

The enzyme catalyses N(6)-[(R)-lipoyl]-L-lysyl-[glycine-cleavage complex H protein] + glycine + H(+) = N(6)-[(R)-S(8)-aminomethyldihydrolipoyl]-L-lysyl-[glycine-cleavage complex H protein] + CO2. Its function is as follows. The glycine cleavage system catalyzes the degradation of glycine. The P protein binds the alpha-amino group of glycine through its pyridoxal phosphate cofactor; CO(2) is released and the remaining methylamine moiety is then transferred to the lipoamide cofactor of the H protein. This Legionella pneumophila subsp. pneumophila (strain Philadelphia 1 / ATCC 33152 / DSM 7513) protein is Probable glycine dehydrogenase (decarboxylating) subunit 2.